A 720-amino-acid chain; its full sequence is Pollen receptor-like kinase 1 (720 aa).

An LRR 1; degenerate repeat occupies 40 to 64; sequence LCSRGHLLIIFLLLVSPFNDAAVDV. Residues 123–146 form an LRR 2; degenerate repeat; that stretch reads LGVLCYEGDVWGLQLENLDLSGVI. 3 LRR repeats span residues 154–179, 226–248, and 249–273; these read LHFL…SLEP, LPQV…HFPP, and NVLK…SLMD. The interval 288–319 is disordered; sequence LESACNSPSQEANNPDSRNSSTISGQSSTDVI. Polar residues predominate over residues 291 to 317; sequence ACNSPSQEANNPDSRNSSTISGQSSTD. Residues 330–350 traverse the membrane as a helical segment; sequence MLIVAVCLVVLCLLIVLILII. Polar residues-rich tracts occupy residues 356–382 and 389–405; these read SSSQ…TSSA and LSGN…NSNK. Residues 356–409 are disordered; it reads SSSQNPQPVESNYSNNDRDQNAFTSSAPDDHVTLSGNSTYSNNQHSNSNKAEAP. A Protein kinase domain is found at 434 to 702; that stretch reads RASAEVLGSG…KEVVQSIQSL (269 aa). ATP-binding positions include 440 to 448 and Lys462; that span reads LGSGNLGSS.

Belongs to the protein kinase superfamily. Interacts with KIP1. In terms of processing, autophosphorylated. Expressed in mature pollen grains and pollen tubes, but not in style, petal, leaf, root or sepal. Very low expression in the ovary.

It is found in the microsome membrane. It localises to the cytoplasm. It carries out the reaction L-seryl-[protein] + ATP = O-phospho-L-seryl-[protein] + ADP + H(+). The enzyme catalyses L-threonyl-[protein] + ATP = O-phospho-L-threonyl-[protein] + ADP + H(+). The catalysed reaction is L-tyrosyl-[protein] + ATP = O-phospho-L-tyrosyl-[protein] + ADP + H(+). Dual-specificity kinase with both serine/threonine and tyrosine kinase activities. Required for postmeiotic development of microspores. Involved in embryo sac development at the late stages of megagametogenesis. Involved in the phosphorylation of KIP1. This is Pollen receptor-like kinase 1 from Petunia integrifolia (Violet-flowered petunia).